Reading from the N-terminus, the 193-residue chain is Xanthine phosphoribosyltransferase (193 aa).

Leu20 and Thr27 together coordinate xanthine. 128 to 132 (ANGQA) contacts 5-phospho-alpha-D-ribose 1-diphosphate. A xanthine-binding site is contributed by Lys156.

The protein belongs to the purine/pyrimidine phosphoribosyltransferase family. Xpt subfamily. As to quaternary structure, homodimer.

Its subcellular location is the cytoplasm. The catalysed reaction is XMP + diphosphate = xanthine + 5-phospho-alpha-D-ribose 1-diphosphate. The protein operates within purine metabolism; XMP biosynthesis via salvage pathway; XMP from xanthine: step 1/1. Converts the preformed base xanthine, a product of nucleic acid breakdown, to xanthosine 5'-monophosphate (XMP), so it can be reused for RNA or DNA synthesis. In Streptococcus pyogenes serotype M5 (strain Manfredo), this protein is Xanthine phosphoribosyltransferase.